We begin with the raw amino-acid sequence, 357 residues long: Fructose-bisphosphate aldolase, cytoplasmic isozyme (357 aa).

Positions 53 and 142 each coordinate substrate. The active-site Proton acceptor is the glutamate 183. Residue lysine 225 is the Schiff-base intermediate with dihydroxyacetone-P of the active site.

This sequence belongs to the class I fructose-bisphosphate aldolase family.

The protein resides in the cytoplasm. The enzyme catalyses beta-D-fructose 1,6-bisphosphate = D-glyceraldehyde 3-phosphate + dihydroxyacetone phosphate. It participates in carbohydrate degradation; glycolysis; D-glyceraldehyde 3-phosphate and glycerone phosphate from D-glucose: step 4/4. The polypeptide is Fructose-bisphosphate aldolase, cytoplasmic isozyme (Spinacia oleracea (Spinach)).